Here is a 117-residue protein sequence, read N- to C-terminus: NADH-ubiquinone oxidoreductase chain 3 (117 aa).

A run of 3 helical transmembrane segments spans residues 4–24, 60–80, and 86–106; these read IIII…LASI, ITII…MIII, and IMIW…GLYH.

The protein belongs to the complex I subunit 3 family.

The protein localises to the mitochondrion membrane. It carries out the reaction a ubiquinone + NADH + 5 H(+)(in) = a ubiquinol + NAD(+) + 4 H(+)(out). Its function is as follows. Core subunit of the mitochondrial membrane respiratory chain NADH dehydrogenase (Complex I) that is believed to belong to the minimal assembly required for catalysis. Complex I functions in the transfer of electrons from NADH to the respiratory chain. The immediate electron acceptor for the enzyme is believed to be ubiquinone. The sequence is that of NADH-ubiquinone oxidoreductase chain 3 (mt:ND3) from Drosophila yakuba (Fruit fly).